The primary structure comprises 384 residues: tRNA-specific 2-thiouridylase MnmA (384 aa).

Residues 18-25 and leucine 44 contribute to the ATP site; that span reads AMSGGVDS. Cysteine 112 functions as the Nucleophile in the catalytic mechanism. Residues cysteine 112 and cysteine 209 are joined by a disulfide bond. Glycine 136 is a binding site for ATP. Positions 159-161 are interaction with tRNA; the sequence is RDQ. Residue cysteine 209 is the Cysteine persulfide intermediate of the active site.

This sequence belongs to the MnmA/TRMU family.

The protein resides in the cytoplasm. It carries out the reaction S-sulfanyl-L-cysteinyl-[protein] + uridine(34) in tRNA + AH2 + ATP = 2-thiouridine(34) in tRNA + L-cysteinyl-[protein] + A + AMP + diphosphate + H(+). Its function is as follows. Catalyzes the 2-thiolation of uridine at the wobble position (U34) of tRNA, leading to the formation of s(2)U34. In Methylobacterium radiotolerans (strain ATCC 27329 / DSM 1819 / JCM 2831 / NBRC 15690 / NCIMB 10815 / 0-1), this protein is tRNA-specific 2-thiouridylase MnmA.